Reading from the N-terminus, the 2442-residue chain is Piezo-type mechanosensitive ion channel component 1 (2442 aa).

Residues 1-5 lie on the Extracellular side of the membrane; sequence MTVPP. Residues 6–26 traverse the membrane as a helical segment; the sequence is LLKSCVVKLLLPAALLAAAII. Position 27 (arginine 27) is a topological domain, cytoplasmic. Residues 28-48 form a helical membrane-spanning segment; that stretch reads PSFLSIGYVLLALVSAVLPPI. Residues 49–56 are Extracellular-facing; sequence RKSLALPK. A helical transmembrane segment spans residues 57–77; the sequence is LVGTFVIITFLFCLAVALGVG. The Cytoplasmic portion of the chain corresponds to 78 to 122; sequence SYQISEQVVHKNDRTYICNRSDTTLFRSIGLVRFHPTGTFESTRA. The helical transmembrane segment at 123 to 143 threads the bilayer; sequence FLPEIIATSAALLTIIIVMFL. Residues 144–173 are Extracellular-facing; sequence SHRDEQLDVVGDVVTVRSESGREQRRQRKL. A helical transmembrane segment spans residues 174–196; the sequence is AAIMWSAIGNSLRRLTNFVLFLF. Topologically, residues 197–198 are cytoplasmic; that stretch reads TA. Residues 199-219 traverse the membrane as a helical segment; the sequence is YVGIVKPSLSNSIYFLAFLFI. Over 220 to 239 the chain is Extracellular; the sequence is STWWSTYTPLRHGVYNQIKK. The chain crosses the membrane as a helical span at residues 240–260; sequence FLIFYSALHFLVLYTYQIPIV. Residues 261–303 lie on the Cytoplasmic side of the membrane; that stretch reads HHSWLPTGSFLPRLFGLTVLMDSSCPEWWKFPFVAPDFNDDDL. The chain crosses the membrane as a helical span at residues 304-324; that stretch reads IMKWPLYANPIVVLVFFYLTV. At 325 to 454 the chain is on the extracellular side; the sequence is AQYKFTRNGS…GDKESAASKG (130 aa). N-linked (GlcNAc...) asparagine glycans are attached at residues asparagine 332, asparagine 392, and asparagine 440. A disordered region spans residues 389 to 417; that stretch reads LLSNASSSANDDEQGRARSRSPLRNGEEQ. Residues 455–475 form a helical membrane-spanning segment; that stretch reads MIAVMTFVIFHSYSIALTAMM. At 476–478 the chain is on the cytoplasmic side; the sequence is TWA. Residues 479 to 499 traverse the membrane as a helical segment; that stretch reads LLYHSIFGLILLILTCILWIF. The Extracellular portion of the chain corresponds to 500–506; the sequence is RDTRKSS. The chain crosses the membrane as a helical span at residues 507–527; sequence FAMAPIILMYIEFLLILQYFL. Topologically, residues 528–552 are cytoplasmic; the sequence is SMDIHAEIGDPAWMNFVGIEWTTLP. Residues 553–573 form a helical membrane-spanning segment; it reads VHAVIILCVQTLLTLPVFLLL. Over 574–633 the chain is Extracellular; sequence RLARREKFYESLSDYERQRRINSYGTFGASKTGAGGVAVAKFQDPKSRKFAAFVEYLSNK. Residues 634–654 traverse the membrane as a helical segment; it reads VSVYFIFVVSVVLLVVSTCFA. Over 655-656 the chain is Cytoplasmic; that stretch reads PN. A helical membrane pass occupies residues 657-677; the sequence is FYNILFFALWALNLIYLKFSF. Over 678-683 the chain is Extracellular; the sequence is RLYRGL. Residues 684 to 704 form a helical membrane-spanning segment; that stretch reads AYAFWLTLTFYTSIVIIALYI. At 705–739 the chain is on the cytoplasmic side; sequence YQFPGVSQWIIRNTSLSQEWLNAIGLVDFRAIGES. The helical transmembrane segment at 740–760 threads the bilayer; that stretch reads GALFLQLLAPIALFVVTMLQL. The Extracellular portion of the chain corresponds to 761-832; it reads KFFHGPWSRA…WRFFEVHISK (72 aa). Positions 768–798 are disordered; the sequence is SRATSPRRAENDPPTSTTEAAAVASTSGTQG. Over residues 782 to 794 the composition is skewed to low complexity; sequence TSTTEAAAVASTS. Asparagine 816 is a glycosylation site (N-linked (GlcNAc...) asparagine). Residues 833-853 form a helical membrane-spanning segment; it reads IVFVIIAIFIANNINALYIPL. The Cytoplasmic segment spans residues 854–874; sequence VILLSLAICLPSAADGIFSLF. A helical membrane pass occupies residues 875-895; the sequence is MCAYLFLVALSKMIYQLDIVP. Residues 896–931 are Extracellular-facing; it reads ELSQIDRGVGADNCSHGNISMPEWFGLKKEVEGTEP. N-linked (GlcNAc...) asparagine glycosylation is found at asparagine 908 and asparagine 913. The chain crosses the membrane as a helical span at residues 932–952; that stretch reads IYMLFGVIVSIIALAFQSIVI. The Cytoplasmic segment spans residues 953-990; that stretch reads YRQRHYRASLGLPESMRAKVFPDFHHSHFDRSLKNAIQ. The helical transmembrane segment at 991–1011 threads the bilayer; sequence FLIDYGFYKFGLEITMIAIGI. Aspartate 1012 is a topological domain (extracellular). The helical transmembrane segment at 1013 to 1033 threads the bilayer; sequence IFNRMDALAAIQCFWLVLFAL. Over 1034–1041 the chain is Cytoplasmic; sequence NKRVFVRR. Residues 1042–1062 traverse the membrane as a helical segment; sequence IWVFYVIYMAILYPLQFFSYV. The Extracellular portion of the chain corresponds to 1063–1096; that stretch reads GLPPDSCIEYPWSYWIPSYSDDARFNLSYLLNLS. Asparagine 1088 and asparagine 1094 each carry an N-linked (GlcNAc...) asparagine glycan. Residues 1097–1117 form a helical membrane-spanning segment; that stretch reads IYGVNWPSAYLIGDFFVLLLA. Residues 1118–1160 are Cytoplasmic-facing; sequence SCQLAVFRREGEDNDSIYNDGNFVIKPENPQYDFIDTKKSYVD. The chain crosses the membrane as a helical span at residues 1161–1181; it reads YFKSFVFHYGHWITLMSTLAA. At 1182–1187 the chain is on the extracellular side; the sequence is GIAGTS. The chain crosses the membrane as a helical span at residues 1188–1210; that stretch reads LFALGYIIFTLTMLWSGNNLYVM. The Cytoplasmic segment spans residues 1211-1231; it reads NSTLRSFEHTLKRWNALLGYT. Residues 1232 to 1252 form a helical membrane-spanning segment; it reads LFTITMKVCLQIFGCVFLSWF. The Extracellular portion of the chain corresponds to 1253–1299; it reads DQSGGWGKTLCIVRQLFSITCVNNECHVLKELEDFSKACAVETKEGN. A helical membrane pass occupies residues 1300–1320; the sequence is IGFDVIALSFLVFQIRIFHSW. Residues 1321 to 1615 are Cytoplasmic-facing; that stretch reads YFQHCMVEYR…VVNCIGAHTD (295 aa). Positions 1463–1502 are disordered; that stretch reads DTIKDPDSRALIAVSEPEARKPGGTEETDGDEDEDNKDSK. Residues 1488-1498 are compositionally biased toward acidic residues; sequence EETDGDEDEDN. A helical transmembrane segment spans residues 1616 to 1636; that stretch reads ILCYFFAIMTQVMTGGLITLP. Residues 1637–1654 are Extracellular-facing; that stretch reads LPLMSLFWGNLSNPRPSK. An N-linked (GlcNAc...) asparagine glycan is attached at asparagine 1646. The chain crosses the membrane as a helical span at residues 1655 to 1675; it reads FFWVTMITYTECVIVIKFVCQ. Residues 1676 to 1706 lie on the Cytoplasmic side of the membrane; sequence FAFMPYNSITWRTEHQMDPMSLDKLFGVSQR. A helical membrane pass occupies residues 1707–1727; sequence DSFALWDIVLLFSLFFHRYML. The Extracellular segment spans residues 1728–1833; that stretch reads RKLGLWKDAN…KFRYIRDLYP (106 aa). Residue asparagine 1737 is glycosylated (N-linked (GlcNAc...) asparagine). The helical transmembrane segment at 1834 to 1854 threads the bilayer; the sequence is IMFGIDVICFLIMTFGYSAFG. Topologically, residues 1855–1866 are cytoplasmic; sequence EGGSGNVLDDVK. The chain crosses the membrane as a helical span at residues 1867–1887; that stretch reads ASRIPVTLVVMLVGMTLAIII. Topologically, residues 1888–1900 are extracellular; the sequence is DRALYLRKSVVGK. The helical transmembrane segment at 1901–1921 threads the bilayer; it reads LIYQVLMIAFLHIWVFLVLPN. At 1922–1930 the chain is on the cytoplasmic side; it reads MTRRSAISN. A helical transmembrane segment spans residues 1931-1951; the sequence is HVAQALYVIKSCYFLVSAWQI. The Extracellular segment spans residues 1952–2046; the sequence is RNGYPELCIG…KGKLVKYMMG (95 aa). A helical transmembrane segment spans residues 2047–2067; it reads FPIIIGVVIFIFSPLLLWSLL. At 2068-2346 the chain is on the cytoplasmic side; that stretch reads NQIGTISMPE…VGFIDRAFPS (279 aa). Residues 2347 to 2367 traverse the membrane as a helical segment; the sequence is FLAKVFKGGVIAVYLSVILVV. At 2368–2442 the chain is on the extracellular side; sequence GRGLVRGIFT…WTRMSKKKQE (75 aa).

The protein belongs to the PIEZO (TC 1.A.75) family. As to expression, expressed in the pharyngeal-intestinal and spermathecal-uterine valves and in multiple reproductive tissues including the germline, somatic oviduct, and spermatheca. During reproduction, it is expressed in sheath cells, sperm, both spermathecal valves and the spermathecal bag cells.

The protein localises to the cell membrane. Pore-forming subunit of a mechanosensitive non-specific cation channel. Generates currents characterized by a linear current-voltage relationship. Plays a role in reproduction by positively regulating inter-tissue signaling to promote oocyte maturation, ovulation and fertilization, and sperm navigation from and to the spermatheca. May play a role in regulating cytosolic and endoplasmic reticulum calcium ion release. This Caenorhabditis elegans protein is Piezo-type mechanosensitive ion channel component 1.